The sequence spans 251 residues: Malonyl-[acyl-carrier protein] O-methyltransferase (251 aa).

Belongs to the methyltransferase superfamily.

The enzyme catalyses malonyl-[ACP] + S-adenosyl-L-methionine = malonyl-[ACP] methyl ester + S-adenosyl-L-homocysteine. Its pathway is cofactor biosynthesis; biotin biosynthesis. Its function is as follows. Converts the free carboxyl group of a malonyl-thioester to its methyl ester by transfer of a methyl group from S-adenosyl-L-methionine (SAM). It allows to synthesize pimeloyl-ACP via the fatty acid synthetic pathway. This is Malonyl-[acyl-carrier protein] O-methyltransferase from Erwinia billingiae (strain Eb661).